Consider the following 793-residue polypeptide: Protein zer-1 homolog (793 aa).

LRR repeat units follow at residues 84–108 (RTSL…LMRH), 187–210 (LHDL…ALGS), and 269–294 (LRHL…ESTT).

This sequence belongs to the zyg-11 family.

In terms of biological role, serves as substrate adapter subunit in an E3 ubiquitin ligase complex CG12084-cul-2-elongin BC. Targets substrates bearing N-terminal glycine degrons for proteasomal degradation. The chain is Protein zer-1 homolog from Drosophila melanogaster (Fruit fly).